Consider the following 176-residue polypeptide: Translation initiation factor IF-3 (176 aa).

It belongs to the IF-3 family. In terms of assembly, monomer.

It localises to the cytoplasm. Its function is as follows. IF-3 binds to the 30S ribosomal subunit and shifts the equilibrium between 70S ribosomes and their 50S and 30S subunits in favor of the free subunits, thus enhancing the availability of 30S subunits on which protein synthesis initiation begins. The sequence is that of Translation initiation factor IF-3 from Nitratidesulfovibrio vulgaris (strain DSM 19637 / Miyazaki F) (Desulfovibrio vulgaris).